A 707-amino-acid polypeptide reads, in one-letter code: MGKKQKENEAYGNSAKYDPSFRGPIKNRGCTDIICCVLFLVFILGYIVVGLVAWVYGDPRQVLYPRNSTGAYCGVGDNKDKPYVLYFNILSCAAAINVISIAENGLQCPTPQVCVSSCPQTPWVVEGFQLSNTVGDVYKEYRNFCVPAVSPDMVVMDSLQKGLCPSFLLPSTPALGRCFPLPNINFTLPEQLQINNTTVSKGISGLLDSINARDVSVKIFEDFAQSWYWILVALGVALVLSLLFILLLRLVAAPLVLLLIVGVLAVLAYGIYHCWQQYRELRDQGVSITQLGFTANLSAYQNVKETWLAALIILAVLEGVLLLMLIFLRQRIRIAIALLKEASRAVGQMMSTMFYPLVTFVLLVICIGYWAVTALYLATSGQPQYVYWVHNTSTPGCEKVLVNVSCDPMAPLNSSCPELKCTFTGYSSSGLAQRSLFNLQIYGILGLFWTVNWVLALGQCVLAGAFASFYWAFHKPRDIPTFPLSSAFIRTLRYHTGSLAFGALILTLVQIARVILEYIDHKLRGSQNPVARCIICCFKCCLWCLEKFIKFLNRNAYIMIAIYGKNFCVSAKNAFMLLMRNVVRVVVLDKVTDLLLFFGKLLVVGGVGVLSFFFFSGRIKGLGKDFKNPDLNYYWLPIMTSIMGAYVIASGFFSVFGMCVDTLFLCFLEDLERNDGSQERPYYMPKALLKILGKKNEVPTGGKNRKK.

At 1 to 32 (MGKKQKENEAYGNSAKYDPSFRGPIKNRGCTD) the chain is on the cytoplasmic side. The helical transmembrane segment at 33-53 (IICCVLFLVFILGYIVVGLVA) threads the bilayer. Residues 54–227 (WVYGDPRQVL…KIFEDFAQSW (174 aa)) lie on the Extracellular side of the membrane. N-linked (GlcNAc...) asparagine glycosylation is found at Asn-67, Asn-185, Asn-195, and Asn-196. A helical membrane pass occupies residues 228 to 248 (YWILVALGVALVLSLLFILLL). Over 249-250 (RL) the chain is Cytoplasmic. The chain crosses the membrane as a helical span at residues 251–271 (VAAPLVLLLIVGVLAVLAYGI). Over 272 to 307 (YHCWQQYRELRDQGVSITQLGFTANLSAYQNVKETW) the chain is Extracellular. The N-linked (GlcNAc...) asparagine glycan is linked to Asn-296. The helical transmembrane segment at 308–328 (LAALIILAVLEGVLLLMLIFL) threads the bilayer. Over 329 to 356 (RQRIRIAIALLKEASRAVGQMMSTMFYP) the chain is Cytoplasmic. Residues 357 to 377 (LVTFVLLVICIGYWAVTALYL) traverse the membrane as a helical segment. The Extracellular portion of the chain corresponds to 378 to 452 (ATSGQPQYVY…GILGLFWTVN (75 aa)). Asn-391, Asn-403, and Asn-413 each carry an N-linked (GlcNAc...) asparagine glycan. Residues 453–473 (WVLALGQCVLAGAFASFYWAF) form a helical membrane-spanning segment. Residues 474-498 (HKPRDIPTFPLSSAFIRTLRYHTGS) are Cytoplasmic-facing. The helical transmembrane segment at 499–519 (LAFGALILTLVQIARVILEYI) threads the bilayer. The Extracellular segment spans residues 520–557 (DHKLRGSQNPVARCIICCFKCCLWCLEKFIKFLNRNAY). A helical membrane pass occupies residues 558–578 (IMIAIYGKNFCVSAKNAFMLL). Residues 579-594 (MRNVVRVVVLDKVTDL) are Cytoplasmic-facing. A helical membrane pass occupies residues 595–615 (LLFFGKLLVVGGVGVLSFFFF). Residues 616–635 (SGRIKGLGKDFKNPDLNYYW) are Extracellular-facing. A helical transmembrane segment spans residues 636 to 656 (LPIMTSIMGAYVIASGFFSVF). Topologically, residues 657–707 (GMCVDTLFLCFLEDLERNDGSQERPYYMPKALLKILGKKNEVPTGGKNRKK) are cytoplasmic.

The protein belongs to the CTL (choline transporter-like) family. N-glycosylated; N-glycosylation of Asn-67 and Asn-391 is required for a proper thiamine pyrophosphate uptake. Highly expressed in intestine, kidney and stomach. Also expressed in testis and lung.

The protein localises to the membrane. It is found in the apical cell membrane. The catalysed reaction is choline(out) + n H(+)(in) = choline(in) + n H(+)(out). It catalyses the reaction thiamine diphosphate(out) = thiamine diphosphate(in). In terms of biological role, choline transporter that plays a role in the choline-acetylcholine system and is required to the efferent innervation of hair cells in the olivocochlear bundle for the maintenance of physiological function of outer hair cells and the protection of hair cells from acoustic injury. Also described as a thiamine pyrophosphate transporter in colon, may mediate the absorption of microbiota-generated thiamine pyrophosphate and contribute to host thiamine (vitamin B1) homeostasis. This chain is Choline transporter-like protein 4, found in Rattus norvegicus (Rat).